The sequence spans 310 residues: N-acetyl-gamma-glutamyl-phosphate reductase (310 aa).

The active site involves C117.

It belongs to the NAGSA dehydrogenase family. Type 2 subfamily.

It is found in the cytoplasm. It catalyses the reaction N-acetyl-L-glutamate 5-semialdehyde + phosphate + NADP(+) = N-acetyl-L-glutamyl 5-phosphate + NADPH + H(+). It participates in amino-acid biosynthesis; L-arginine biosynthesis; N(2)-acetyl-L-ornithine from L-glutamate: step 3/4. Its function is as follows. Catalyzes the NADPH-dependent reduction of N-acetyl-5-glutamyl phosphate to yield N-acetyl-L-glutamate 5-semialdehyde. The polypeptide is N-acetyl-gamma-glutamyl-phosphate reductase (Rhizobium meliloti (strain 1021) (Ensifer meliloti)).